We begin with the raw amino-acid sequence, 269 residues long: Tryptophan synthase alpha chain (269 aa).

Residues Glu54 and Asp65 each act as proton acceptor in the active site.

Belongs to the TrpA family. In terms of assembly, tetramer of two alpha and two beta chains.

The enzyme catalyses (1S,2R)-1-C-(indol-3-yl)glycerol 3-phosphate + L-serine = D-glyceraldehyde 3-phosphate + L-tryptophan + H2O. It functions in the pathway amino-acid biosynthesis; L-tryptophan biosynthesis; L-tryptophan from chorismate: step 5/5. In terms of biological role, the alpha subunit is responsible for the aldol cleavage of indoleglycerol phosphate to indole and glyceraldehyde 3-phosphate. The chain is Tryptophan synthase alpha chain from Synechococcus sp. (strain CC9902).